The primary structure comprises 430 residues: Adenylosuccinate synthetase (430 aa).

GTP contacts are provided by residues 12–18 (GDEGKGK) and 40–42 (GHT). The active-site Proton acceptor is D13. Mg(2+) contacts are provided by D13 and G40. IMP contacts are provided by residues 13–16 (DEGK), 38–41 (NAGH), T128, R142, Q223, T238, and R302. Residue H41 is the Proton donor of the active site. 298–304 (TTTGRPR) lines the substrate pocket. GTP is bound by residues R304, 330–332 (SID), and 412–414 (SVG).

It belongs to the adenylosuccinate synthetase family. As to quaternary structure, homodimer. Requires Mg(2+) as cofactor.

It localises to the cytoplasm. It catalyses the reaction IMP + L-aspartate + GTP = N(6)-(1,2-dicarboxyethyl)-AMP + GDP + phosphate + 2 H(+). Its pathway is purine metabolism; AMP biosynthesis via de novo pathway; AMP from IMP: step 1/2. Plays an important role in the de novo pathway of purine nucleotide biosynthesis. Catalyzes the first committed step in the biosynthesis of AMP from IMP. This is Adenylosuccinate synthetase from Streptococcus equi subsp. equi (strain 4047).